We begin with the raw amino-acid sequence, 983 residues long: Protein translocase subunit SecA (983 aa).

Residues Q83, 101-105 (GEGKT), and D489 each bind ATP. Residues 948 to 983 (ISSEEENNNEKTNININEDLERTKGEAQQTAKNPNE) form a disordered region. The span at 973-983 (EAQQTAKNPNE) shows a compositional bias: polar residues.

This sequence belongs to the SecA family. As to quaternary structure, monomer and homodimer. Part of the essential Sec protein translocation apparatus which comprises SecA, SecYEG and auxiliary proteins SecDF. Other proteins may also be involved.

The protein resides in the cell membrane. Its subcellular location is the cytoplasm. It catalyses the reaction ATP + H2O + cellular proteinSide 1 = ADP + phosphate + cellular proteinSide 2.. In terms of biological role, part of the Sec protein translocase complex. Interacts with the SecYEG preprotein conducting channel. Has a central role in coupling the hydrolysis of ATP to the transfer of proteins into and across the cell membrane, serving as an ATP-driven molecular motor driving the stepwise translocation of polypeptide chains across the membrane. The protein is Protein translocase subunit SecA of Mesomycoplasma hyopneumoniae (strain 7448) (Mycoplasma hyopneumoniae).